The following is a 129-amino-acid chain: Cytochrome c oxidase subunit 5B, mitochondrial (129 aa).

A mitochondrion-targeting transit peptide spans Met-1–Met-31. Residues Lys-68 and Lys-86 each carry the N6-acetyllysine modification. Cys-91, Cys-93, Cys-113, and Cys-116 together coordinate Zn(2+). Position 121 is an N6-acetyllysine (Lys-121).

Belongs to the cytochrome c oxidase subunit 5B family. In terms of assembly, component of the cytochrome c oxidase (complex IV, CIV), a multisubunit enzyme composed of 14 subunits. The complex is composed of a catalytic core of 3 subunits MT-CO1, MT-CO2 and MT-CO3, encoded in the mitochondrial DNA, and 11 supernumerary subunits COX4I1 (or COX4I2), COX5A, COX5B, COX6A1 (or COX6A2), COX6B1 (or COX6B2), COX6C, COX7A2 (or COX7A1), COX7B, COX7C, COX8A and NDUFA4, which are encoded in the nuclear genome. The complex exists as a monomer or a dimer and forms supercomplexes (SCs) in the inner mitochondrial membrane with NADH-ubiquinone oxidoreductase (complex I, CI) and ubiquinol-cytochrome c oxidoreductase (cytochrome b-c1 complex, complex III, CIII), resulting in different assemblies (supercomplex SCI(1)III(2)IV(1) and megacomplex MCI(2)III(2)IV(2)).

It is found in the mitochondrion inner membrane. It participates in energy metabolism; oxidative phosphorylation. Its function is as follows. Component of the cytochrome c oxidase, the last enzyme in the mitochondrial electron transport chain which drives oxidative phosphorylation. The respiratory chain contains 3 multisubunit complexes succinate dehydrogenase (complex II, CII), ubiquinol-cytochrome c oxidoreductase (cytochrome b-c1 complex, complex III, CIII) and cytochrome c oxidase (complex IV, CIV), that cooperate to transfer electrons derived from NADH and succinate to molecular oxygen, creating an electrochemical gradient over the inner membrane that drives transmembrane transport and the ATP synthase. Cytochrome c oxidase is the component of the respiratory chain that catalyzes the reduction of oxygen to water. Electrons originating from reduced cytochrome c in the intermembrane space (IMS) are transferred via the dinuclear copper A center (CU(A)) of subunit 2 and heme A of subunit 1 to the active site in subunit 1, a binuclear center (BNC) formed by heme A3 and copper B (CU(B)). The BNC reduces molecular oxygen to 2 water molecules using 4 electrons from cytochrome c in the IMS and 4 protons from the mitochondrial matrix. The protein is Cytochrome c oxidase subunit 5B, mitochondrial (COX5B) of Homo sapiens (Human).